A 932-amino-acid chain; its full sequence is AP-3 complex subunit delta (932 aa).

Thr2 carries the N-acetylthreonine modification. HEAT repeat units lie at residues 157-194 (SLAR…QYPE), 196-231 (LRDN…KNPQ), 233-269 (FIQL…VEPK), 270-307 (LRAK…LEED), 310-346 (ETAM…KINT), 347-384 (DFIS…EDNL), 386-425 (AIVQ…ENYK), 427-466 (KMVN…DISD), 490-527 (VTIA…TLVE), 528-564 (NGND…NWCN), 570-601 (KRFE…ERSV), and 602-638 (EVLE…AYEL). Phosphoserine occurs at positions 700 and 727. A disordered region spans residues 720–868 (EREKERMSNP…EEGNLRKEDE (149 aa)). Composition is skewed to basic and acidic residues over residues 738 to 747 (ERTKNSKDLL) and 755 to 766 (SDKKPETIRLNR). Phosphothreonine is present on Thr767. A compositionally biased stretch (low complexity) spans 767–779 (TDNSLNSLSLSTT). Phosphoserine is present on residues Ser770 and Ser773. The segment covering 783–793 (RKKKKGKKKNR) has biased composition (basic residues). Ser798 carries the post-translational modification Phosphoserine. Positions 806–832 (APKRKDAFQKPHDNHSTQNPLKKDKIN) are enriched in basic and acidic residues. The segment covering 838-855 (QLENFDFSNFGQSSNAGR) has biased composition (polar residues). Residues 857-868 (SQEEGNLRKEDE) show a composition bias toward basic and acidic residues. The stretch at 858 to 878 (QEEGNLRKEDELELSRLEANL) forms a coiled coil. Position 888 is a phosphoserine (Ser888). The span at 897–915 (KKKKKGKKSKSKNKLKTKA) shows a compositional bias: basic residues. The tract at residues 897 to 932 (KKKKKGKKSKSKNKLKTKAKNSPEPNEFLRDQSTDI) is disordered. Ser918 bears the Phosphoserine mark. A compositionally biased stretch (basic and acidic residues) spans 923 to 932 (EFLRDQSTDI).

It belongs to the adaptor complexes large subunit family. As to quaternary structure, adaptor protein complex 3 (AP-3) is a heterotetramer composed of 2 large adaptins (APL5 and APL6), a medium adaptin (APM3) and a small adaptin (APS3). Interacts with VPS41.

Its subcellular location is the golgi apparatus. The protein localises to the cytoplasmic vesicle. It localises to the clathrin-coated vesicle membrane. Functionally, part of the AP-3 complex, an adaptor-related complex which is not clathrin-associated. The complex is associated with the Golgi region as well as more peripheral structures. It facilitates the budding of vesicles from the Golgi membrane and may be directly involved in trafficking to the vacuole. Required for the transport via the ALP pathway, which directs the transport of the cargo proteins PHO8 and VAM3 to the vacuole. The chain is AP-3 complex subunit delta (APL5) from Saccharomyces cerevisiae (strain ATCC 204508 / S288c) (Baker's yeast).